The chain runs to 68 residues: MAKGKDARVRVILECTSCTRNGANAKKESPGISRYITEKNRHNTPSRLELKKFCPYCSKHMIHAEIKK.

The protein belongs to the bacterial ribosomal protein bL33 family.

It localises to the plastid. It is found in the chloroplast. This chain is Large ribosomal subunit protein bL33c, found in Amborella trichopoda.